The chain runs to 432 residues: Adenylosuccinate synthetase (432 aa).

GTP contacts are provided by residues 12 to 18 (GDEGKGK) and 40 to 42 (GHT). Catalysis depends on Asp-13, which acts as the Proton acceptor. Residues Asp-13 and Gly-40 each contribute to the Mg(2+) site. IMP-binding positions include 13 to 16 (DEGK), 38 to 41 (NAGH), Thr-132, Arg-146, Gln-226, Thr-241, and Arg-305. His-41 acts as the Proton donor in catalysis. 301-307 (TVTGRKR) is a substrate binding site. Residues Arg-307, 333 to 335 (KLD), and 415 to 417 (STS) contribute to the GTP site.

Belongs to the adenylosuccinate synthetase family. As to quaternary structure, homodimer. Mg(2+) serves as cofactor.

It localises to the cytoplasm. The catalysed reaction is IMP + L-aspartate + GTP = N(6)-(1,2-dicarboxyethyl)-AMP + GDP + phosphate + 2 H(+). It participates in purine metabolism; AMP biosynthesis via de novo pathway; AMP from IMP: step 1/2. Plays an important role in the de novo pathway of purine nucleotide biosynthesis. Catalyzes the first committed step in the biosynthesis of AMP from IMP. This is Adenylosuccinate synthetase from Sinorhizobium fredii (strain NBRC 101917 / NGR234).